Consider the following 1163-residue polypeptide: Zinc finger protein 516 (1163 aa).

A compositionally biased stretch (basic and acidic residues) spans 1 to 13; it reads MDRNREAEMELRR. Residues 1–26 are disordered; the sequence is MDRNREAEMELRRGPSPTRAGRGHEV. A mediates promoter DNA-binding and activation of transcription region spans residues 1-431; the sequence is MDRNREAEME…ATRGKVAEPA (431 aa). 7 C2H2-type zinc fingers span residues 34–56, 62–84, 174–197, 200–223, 248–270, 276–298, and 335–357; these read HTCC…MRKH, YKCP…IRSH, VQCS…HQAH, FKCR…ERDH, FPCE…MKKH, HGCH…MKAH, and EVCA…NAIH. The segment covering 460–469 has biased composition (basic and acidic residues); it reads SQEKRKREQD. 3 disordered regions span residues 460-512, 533-667, and 679-730; these read SQEK…TGQG, HSRV…QEQH, and HPKQ…APDL. Residues 496–507 are compositionally biased toward low complexity; sequence RSAARPNRRAAA. The C2H2-type 8 zinc finger occupies 515 to 537; sequence SECFECGKIFRTYHQMVLHSRVH. Residues 542-552 show a composition bias toward basic and acidic residues; it reads RERDSDGDRAA. A compositionally biased stretch (polar residues) spans 561–572; that stretch reads EGDSASQPSSPG. The span at 588–598 shows a compositional bias: acidic residues; the sequence is EAAEDSGEEGA. Polar residues predominate over residues 615-625; the sequence is EVTSTELSSGD. Residues 626–641 are compositionally biased toward basic and acidic residues; sequence QSHKMGDNASERDTGE. Lys643 is covalently cross-linked (Glycyl lysine isopeptide (Lys-Gly) (interchain with G-Cter in SUMO2)). Over residues 656–667 the composition is skewed to basic and acidic residues; it reads SSRETSRRQEQH. Residue Lys681 forms a Glycyl lysine isopeptide (Lys-Gly) (interchain with G-Cter in SUMO2) linkage. A compositionally biased stretch (basic and acidic residues) spans 706–720; that stretch reads PAEKLSDLHNKEHSG. A C2H2-type 9; atypical zinc finger spans residues 760–783; that stretch reads HPCPYCSHKTYYPEVLWMHKRIWH. The segment at 838 to 1007 is disordered; the sequence is TQVPGGMPGS…PPREPPSKAA (170 aa). A compositionally biased stretch (low complexity) spans 840 to 857; sequence VPGGMPGSKSGSSPLGVV. Residues Lys1043 and Lys1062 each participate in a glycyl lysine isopeptide (Lys-Gly) (interchain with G-Cter in SUMO2) cross-link. A C2H2-type 10 zinc finger spans residues 1098 to 1120; sequence FVCIECGKSFHQPGHLRAHMRAH. The tract at residues 1126-1163 is disordered; sequence SDGPRGSEVHTTSADAPKQGRDHSNTGTVQTVPLRKGT.

It belongs to the krueppel C2H2-type zinc-finger protein family. In terms of assembly, interacts with PRDM16; the interaction is direct and may play a role in the transcription of brown adipose tissue-specific genes. Interacts with PWWP2B. Interacts with HDAC1; this interaction is enhanced in the presence of PWWP2B.

The protein localises to the nucleus. Its function is as follows. Transcriptional regulator that binds to the promoter and activates the transcription of genes promoting brown adipose tissue (BAT) differentiation. Among brown adipose tissue-specific genes, binds the proximal region of the promoter of the UCP1 gene to activate its transcription and thereby regulate thermogenesis. May also play a role in the cellular response to replication stress. The sequence is that of Zinc finger protein 516 from Homo sapiens (Human).